The sequence spans 70 residues: Brevinin-1Vb (70 aa).

Positions 1 to 22 (MFTLKKSLLLLFFLGTINLSLC) are cleaved as a signal peptide. The propeptide occupies 23–44 (EEERNAEEERRDEPDEMNVEVE). Residues Cys-64 and Cys-70 are joined by a disulfide bond.

Expressed by the skin glands.

The protein resides in the secreted. Antimicrobial peptide. This Odorrana versabilis (Chinese bamboo leaf odorous frog) protein is Brevinin-1Vb.